The sequence spans 517 residues: Phenol 2-monooxygenase, oxygenase component DmpN (517 aa).

6 residues coordinate Fe cation: Glu-109, Glu-139, His-142, Glu-200, Glu-234, and His-237.

It belongs to the TmoA/XamoA family. As to quaternary structure, the multicomponent enzyme phenol hydroxylase is formed by DmpL (P1 component), DmpM (P2 component), DmpN (P3 component), DmpO (P4 component) and DmpP (P5 component). The oxygenase component is a dimer composed of three subunits, DmpL, DmpN and DmpO (DmpLNO). DmpN interacts with the auxiliary protein DmpK (P0 component). Fe(2+) serves as cofactor.

It carries out the reaction phenol + NADH + O2 + H(+) = catechol + NAD(+) + H2O. The protein operates within aromatic compound metabolism; phenol degradation. Requires DmpM for efficient turnover. The activity of DmpLNO oxygenase is inhibited by dithiothreitol (DTT) by a mechanism apparently involving H(2)O(2) generation. Part of a multicomponent enzyme which catalyzes the degradation of phenol and some of its methylated derivatives. DmpL, DmpN and DmpO form the oxygenase component of the complex. Required for growth on phenol and for in vitro phenol hydroxylase activity. The polypeptide is Phenol 2-monooxygenase, oxygenase component DmpN (Pseudomonas sp. (strain CF600)).